Here is a 227-residue protein sequence, read N- to C-terminus: Translation initiation factor 6 (227 aa).

Belongs to the eIF-6 family.

Functionally, binds to the 50S ribosomal subunit and prevents its association with the 30S ribosomal subunit to form the 70S initiation complex. This chain is Translation initiation factor 6, found in Staphylothermus marinus (strain ATCC 43588 / DSM 3639 / JCM 9404 / F1).